The following is a 163-amino-acid chain: ATP synthase subunit delta, chloroplastic (163 aa).

Belongs to the ATPase delta chain family. F-type ATPases have 2 components, F(1) - the catalytic core - and F(0) - the membrane proton channel. F(1) has five subunits: alpha(3), beta(3), gamma(1), delta(1), epsilon(1). CF(0) has four main subunits: a(1), b(1), b'(1) and c(10-14). The alpha and beta chains form an alternating ring which encloses part of the gamma chain. F(1) is attached to F(0) by a central stalk formed by the gamma and epsilon chains, while a peripheral stalk is formed by the delta, b and b' chains.

The protein localises to the plastid. It localises to the chloroplast thylakoid membrane. F(1)F(0) ATP synthase produces ATP from ADP in the presence of a proton or sodium gradient. F-type ATPases consist of two structural domains, F(1) containing the extramembraneous catalytic core and F(0) containing the membrane proton channel, linked together by a central stalk and a peripheral stalk. During catalysis, ATP synthesis in the catalytic domain of F(1) is coupled via a rotary mechanism of the central stalk subunits to proton translocation. Its function is as follows. This protein is part of the stalk that links CF(0) to CF(1). It either transmits conformational changes from CF(0) to CF(1) or is implicated in proton conduction. This Cyanidioschyzon merolae (strain NIES-3377 / 10D) (Unicellular red alga) protein is ATP synthase subunit delta, chloroplastic.